We begin with the raw amino-acid sequence, 1382 residues long: Suppressor of organelle fusion 2 (1382 aa).

In terms of domain architecture, BEACH spans 229 to 463; the sequence is RIPLDEATSN…QLFNRPHPIR (235 aa). 2 WD repeats span residues 1094 to 1133 and 1140 to 1176; these read GHQEKIRKLAAISNENSFVSASSDKTVKLWSIKPELDEIG and KHTRPVHDITILADNSIASTDGVLHVWDPFRTTLLAQ.

Belongs to the WD repeat WDR81 family. Interacts with sorf-1; the interaction is direct. Interacts with bec-1.

It is found in the early endosome. Its subcellular location is the late endosome. It localises to the cytoplasm. Together with sorf-1 negatively regulates the levels of phosphatidylinositol 3-phosphate (PtdIns3P) to enable the conversion of early endosomes to late endosomes. Binds to sorf-1 and the sorf-1-sorf-2 complex likely acts through bec-1, a non-catalytic subunit of phosphatidylinositol 3-kinase (PI3K), to suppress PI3K activity, thereby negatively regulating endosomal PtdIns3P levels. The protein is Suppressor of organelle fusion 2 of Caenorhabditis elegans.